The sequence spans 245 residues: 1-(5-phosphoribosyl)-5-[(5-phosphoribosylamino)methylideneamino] imidazole-4-carboxamide isomerase (245 aa).

Catalysis depends on D7, which acts as the Proton acceptor. D129 serves as the catalytic Proton donor.

This sequence belongs to the HisA/HisF family.

The protein resides in the cytoplasm. It catalyses the reaction 1-(5-phospho-beta-D-ribosyl)-5-[(5-phospho-beta-D-ribosylamino)methylideneamino]imidazole-4-carboxamide = 5-[(5-phospho-1-deoxy-D-ribulos-1-ylimino)methylamino]-1-(5-phospho-beta-D-ribosyl)imidazole-4-carboxamide. The protein operates within amino-acid biosynthesis; L-histidine biosynthesis; L-histidine from 5-phospho-alpha-D-ribose 1-diphosphate: step 4/9. This chain is 1-(5-phosphoribosyl)-5-[(5-phosphoribosylamino)methylideneamino] imidazole-4-carboxamide isomerase, found in Escherichia coli O45:K1 (strain S88 / ExPEC).